A 29-amino-acid polypeptide reads, in one-letter code: Cyclotide vibi-C (29 aa).

A cross-link (cyclopeptide (Gly-Asn)) is located at residues 1 to 29 (GLPVCGETCAFGSCYTPGCSCSWPVCTRN). 3 cysteine pairs are disulfide-bonded: Cys5–Cys19, Cys9–Cys21, and Cys14–Cys26.

This is a cyclic peptide.

Probably participates in a plant defense mechanism. This chain is Cyclotide vibi-C, found in Viola biflora (Yellow wood violet).